We begin with the raw amino-acid sequence, 429 residues long: Cholesterol 7-desaturase nvd (429 aa).

A helical transmembrane segment spans residues F23–V43. The Rieske domain occupies Y98 to I201. 4 residues coordinate [2Fe-2S] cluster: C138, H140, C158, and H161.

The protein belongs to the cholesterol 7-desaturase family. [2Fe-2S] cluster serves as cofactor. As to expression, expressed predominantly in the prothoracic gland and weakly in brain and malpighian tubules.

It localises to the membrane. It carries out the reaction cholesterol + NADPH + O2 + H(+) = 7-dehydrocholesterol + NADP(+) + 2 H2O. It catalyses the reaction cholesterol + NADH + O2 + H(+) = 7-dehydrocholesterol + NAD(+) + 2 H2O. It participates in steroid hormone biosynthesis; dafachronic acid biosynthesis. Its function is as follows. Catalyzes the production of 7-dehydrocholesterol (7-DHC or cholesta-5,7-dien-3beta-ol) by inserting a double bond (desaturating) at the C7-C8 single bond of cholesterol. Essential regulator of steroid biosynthesis, as this reaction is the first step in the synthesis of the steroid hormone Delta(7)-dafachronic acid. Required for insect molting, metamorphosis and body growth throughout development via the regulation of ecdysteroid biosynthesis in the prothoracic gland. The protein is Cholesterol 7-desaturase nvd of Drosophila melanogaster (Fruit fly).